The chain runs to 171 residues: uncharacterized protein (171 aa).

Belongs to the IUNH family.

This is an uncharacterized protein from Acidianus ambivalens (Desulfurolobus ambivalens).